Reading from the N-terminus, the 292-residue chain is uncharacterized protein (292 aa).

Catalysis depends on charge relay system residues S44 and Y106. The Proton donor role is filled by Y132. K161 (schiff-base intermediate with substrate) is an active-site residue.

This sequence belongs to the DapA family. In terms of assembly, homotetramer.

It is found in the cytoplasm. This is an uncharacterized protein from Thermoplasma acidophilum (strain ATCC 25905 / DSM 1728 / JCM 9062 / NBRC 15155 / AMRC-C165).